The chain runs to 170 residues: J domain-containing protein (170 aa).

The region spanning 17–82 is the J domain; it reads DYYALLGCDE…SKRALYDKWR (66 aa). Residues 101 to 170 form a disordered region; that stretch reads QQSMHWSKPN…VISKFRNYEI (70 aa). Over residues 110 to 120 the composition is skewed to basic and acidic residues; that stretch reads NTKDRMLEGEP. 2 stretches are compositionally biased toward low complexity: residues 121-135 and 142-153; these read GKPS…SNPG and GGAALWGRWGAG.

This is J domain-containing protein (jdp) from Manduca sexta (Tobacco hawkmoth).